A 264-amino-acid polypeptide reads, in one-letter code: Thymidylate synthase (264 aa).

Arg21 is a dUMP binding site. Position 51 (His51) interacts with (6R)-5,10-methylene-5,6,7,8-tetrahydrofolate. Residue 126–127 participates in dUMP binding; the sequence is RR. Residue Cys146 is the Nucleophile of the active site. DUMP-binding positions include 166–169, Asn177, and 207–209; these read RSAD and HLY. Asp169 contributes to the (6R)-5,10-methylene-5,6,7,8-tetrahydrofolate binding site. Residue Ala263 coordinates (6R)-5,10-methylene-5,6,7,8-tetrahydrofolate.

Belongs to the thymidylate synthase family. Bacterial-type ThyA subfamily. As to quaternary structure, homodimer.

It is found in the cytoplasm. It catalyses the reaction dUMP + (6R)-5,10-methylene-5,6,7,8-tetrahydrofolate = 7,8-dihydrofolate + dTMP. It functions in the pathway pyrimidine metabolism; dTTP biosynthesis. Its function is as follows. Catalyzes the reductive methylation of 2'-deoxyuridine-5'-monophosphate (dUMP) to 2'-deoxythymidine-5'-monophosphate (dTMP) while utilizing 5,10-methylenetetrahydrofolate (mTHF) as the methyl donor and reductant in the reaction, yielding dihydrofolate (DHF) as a by-product. This enzymatic reaction provides an intracellular de novo source of dTMP, an essential precursor for DNA biosynthesis. The sequence is that of Thymidylate synthase from Bdellovibrio bacteriovorus (strain ATCC 15356 / DSM 50701 / NCIMB 9529 / HD100).